The sequence spans 202 residues: Peptide methionine sulfoxide reductase A1 (202 aa).

A disordered region spans residues 1–20 (MNILNKLGIGSSRQTNMDPS). Ser189 is subject to Phosphoserine.

Belongs to the MsrA Met sulfoxide reductase family.

It is found in the cytoplasm. The protein resides in the cytosol. The catalysed reaction is L-methionyl-[protein] + [thioredoxin]-disulfide + H2O = L-methionyl-(S)-S-oxide-[protein] + [thioredoxin]-dithiol. It catalyses the reaction [thioredoxin]-disulfide + L-methionine + H2O = L-methionine (S)-S-oxide + [thioredoxin]-dithiol. Functionally, catalyzes the reduction of methionine sulfoxide (MetSO) to methionine in proteins. Plays a protective role against oxidative stress by restoring activity to proteins that have been inactivated by methionine oxidation. MSRA family specifically reduces the MetSO S-enantiomer. This Arabidopsis thaliana (Mouse-ear cress) protein is Peptide methionine sulfoxide reductase A1 (MSRA1).